The sequence spans 1039 residues: MSKDSDNPGYESGYESDTEEKKQEQAVPAQPISSTANKDGNPDTSEFDPLANKEYTEEQKQKLEQEQKEYFSQTTPQELEADDGFSFTPASSTQSTPSISSLSGGISSDSQTSDPITKAVRETIIQPQKDEIAEQILKDLAALADRDLAEQKRKEIEEEKDKTLSAFFGNPANREFIDKALENPELKKKLESIEIAGYKNVLSTYSAANGYQGGFKPVQWENQISASDLRATVVRNDAGDELCTLNETTVKTKPFTVAKQDGTQVQINSYREIDFPIKLDKADGSMHLSMVALKADGTKPSKDKAVYFTAHYEEGPNGKPQLKEISSPKPLKFAGDGPDAVAYIEHGGEIYTLAVTRGKYKEMMREVELNQGQSVDLSQTIAEDLTKVQGRSQETPQPIITPNQELKSSIETPTTTQVPPITPANQPLQPETSQMPQPQQVNPNLLNAATALSTSMQDLLNYVNAGLTKEKDGNKQIDLINEAATAILNNEKSDIAEKQANIIALTENTVNNNDLTPDTKVAGVNAVLETIKNDQNTPDLEKSKMLEATVAIALNSENLEPKQKQQMLEKAVDVGLSLKDDASRVTAIDGITDAVIKSNLSTEDKGTMLIAVGDKVNASELSNAEKQKLLGSVLKKGVEAQVLSPEQQQLMQQNLDKITAEQTKNAQITEVQGILANPAFNTIAKTEAIQNVTTKVLDSPIKAEIKGETLESITKVVAESPLNGQDKADIVKGMGEAIASHKTMAPTEKISTIESVEKGVAESITDLEDKKLMTKGLVEGIYEGKANPEITSEKTKAVSRGIDKSTAIPEDKQALKDAANEAALDRETQNLTEGLKRQNLGEPKPRDDIYNKAQDVADALKNVITPVLDAHPEKREVSEEEEVVKKTSSILNDISKLAIEKVNNFRAMLSPDGNLKTLEEKKAESTKKVDELVKEFGTKSSTEEQQSFIKANLIDDKTLSKEIRLQTINKLLQEQAQKRAEAIENPNVKTEDVRVVSGVNIKDNIKIMGALMNARDSIIQSENLNKSTPIKRESSFPPR.

Disordered regions lie at residues 1–115 (MSKD…TSDP), 408–438 (SSIE…MPQP), and 1020–1039 (QSEN…FPPR). Residues 31-44 (PISSTANKDGNPDT) show a composition bias toward polar residues. Over residues 54 to 69 (EYTEEQKQKLEQEQKE) the composition is skewed to basic and acidic residues. Positions 85 to 114 (FSFTPASSTQSTPSISSLSGGISSDSQTSD) are enriched in low complexity. Positions 424–438 (ANQPLQPETSQMPQP) are enriched in polar residues. The segment covering 1030 to 1039 (IKRESSFPPR) has biased composition (basic and acidic residues).

It localises to the cytoplasm. This Rickettsia felis (strain ATCC VR-1525 / URRWXCal2) (Rickettsia azadi) protein is Antigenic heat-stable 120 kDa protein (sca4).